The sequence spans 736 residues: MATANSIIVLDDDDENEAAAQPGPSHPLPSTASPEAEAPSSSEPHGARGSSSSGGKKCYKLENEKLFQEFLELCKTQTADHPEVVPFLCNRQQRAHSLFLASAEFCNILSRVLSRAQSRPFKLYVYINELCTVLKGHSAKKKLNLAPVATTSNEPSGNNPPTHLSLDPTNAENTASQAPRTRGSRRQIQRLEQLLALYVAEIRRLQERELDLSELDDPDSTYLQEARLKRKLIRLFGRLCELKDCSSLTGRVIKQRIPYRGTRYPKVNRRIERLINKPGPDTFPDYGDVLRAVKKAAARHSLGLPRQQLQLMAQDAFRNVGIRLQEQRHLDLIYNFGCHLTNDYRPGVDPALSYPVLARRLRENRILALIRLDQVISFYAMLQDGGEEGKKKKRRARLHGPSSHSANPPEPSLDSGEGPIGMASQGCPSASRAETDDEDDEESDEEEEEEEEEEEEEATDFEEEEDLEQMQEGQEDDEEEEEEEEAAGKDGDGSPMSSPQISTEKNLEPGKQISRSSGEQQNKVSPLLLSEEPLAPSSIDAESNGEQPEELTLEEESPVSQLFELEIEALPLDTPSFVEMDISFFRKQSEEPFTTVLENGAGMVSSTSFNGGVSPHNWGDSGPPCKKSRKEKKQTGSGPLGNSYVERQRSVHEKNGKKICTLPSPPSPLASLAPVADSSTRVDSPSHGLVTSSLCNPSPAQLSQTPQSQPPRPSTYKTSVATQCDPEEIIVLSDSD.

Residues 1-55 are disordered; that stretch reads MATANSIIVLDDDDENEAAAQPGPSHPLPSTASPEAEAPSSSEPHGARGSSSSGG. A necessary for interaction with USP7 and ATRX region spans residues 1–160; the sequence is MATANSIIVL…TSNEPSGNNP (160 aa). Phosphoserine is present on Ser-25. Low complexity predominate over residues 28–55; that stretch reads LPSTASPEAEAPSSSEPHGARGSSSSGG. A Glycyl lysine isopeptide (Lys-Gly) (interchain with G-Cter in SUMO2) cross-link involves residue Lys-142. The segment at 148-185 is disordered; sequence VATTSNEPSGNNPPTHLSLDPTNAENTASQAPRTRGSR. A compositionally biased stretch (polar residues) spans 149–179; that stretch reads ATTSNEPSGNNPPTHLSLDPTNAENTASQAP. Residues 180–216 adopt a coiled-coil conformation; sequence RTRGSRRQIQRLEQLLALYVAEIRRLQERELDLSELD. Positions 183–417 are interaction with histone H3.3; it reads GSRRQIQRLE…PPEPSLDSGE (235 aa). Ser-213 is subject to Phosphoserine. Residues 347 to 566 are necessary for interaction with USP7; that stretch reads GVDPALSYPV…SPVSQLFELE (220 aa). A disordered region spans residues 387–558; that stretch reads EEGKKKKRRA…EELTLEEESP (172 aa). Positions 391–395 match the Nuclear localization signal motif; the sequence is KKKRR. Phosphoserine occurs at positions 412 and 424. The stretch at 430-490 forms a coiled coil; sequence ASRAETDDED…EEEEEAAGKD (61 aa). Positions 435–485 are enriched in acidic residues; sequence TDDEDDEESDEEEEEEEEEEEEEATDFEEEEDLEQMQEGQEDDEEEEEEEE. Thr-459 is modified (phosphothreonine). Ser-494 and Ser-497 each carry phosphoserine. Positions 495 to 504 are enriched in polar residues; sequence PMSSPQISTE. The residue at position 511 (Lys-511) is an N6-acetyllysine. Polar residues predominate over residues 513-524; it reads ISRSSGEQQNKV. A compositionally biased stretch (low complexity) spans 525 to 538; sequence SPLLLSEEPLAPSS. Positions 547 to 557 are enriched in acidic residues; that stretch reads QPEELTLEEES. Phosphoserine occurs at positions 557 and 576. The segment at 602–736 is disordered; the sequence is GMVSSTSFNG…EEIIVLSDSD (135 aa). Positions 622–736 are interaction with SPOP; the sequence is GPPCKKSRKE…EEIIVLSDSD (115 aa). The Nuclear localization signal motif lies at 624-630; the sequence is PCKKSRK. Glycyl lysine isopeptide (Lys-Gly) (interchain with G-Cter in SUMO1) cross-links involve residues Lys-626 and Lys-627. Positions 646–656 are enriched in basic and acidic residues; it reads ERQRSVHEKNG. Phosphoserine is present on residues Ser-664 and Ser-667. Residues 669-679 show a composition bias toward low complexity; sequence LASLAPVADSS. Residues Ser-684, Ser-698, Ser-733, and Ser-735 each carry the phosphoserine modification. A compositionally biased stretch (low complexity) spans 697 to 707; sequence PSPAQLSQTPQ. Residues 729–736 are sumo interaction motif (SIM); the sequence is IIVLSDSD.

Belongs to the DAXX family. Homomultimer. Interacts (via C-terminus) with TNFRSF6 (via death domain). Interacts with PAX5, SLC2A4/GLUT4, MAP3K5, TGFBR2, phosphorylated dimeric HSPB1/HSP27, CENPC, ETS1, sumoylated PML, UBE2I, MCRS1 and TP53. Interacts (via N-terminus) with HIPK2 and HIPK3. Interacts with HIPK1, which induces translocation from PML/POD/ND10 nuclear bodies to chromatin and enhances association with HDAC1. Interacts (non-phosphorylated) with PAX3, PAX7, DEK, HDAC1, HDAC2, HDAC3, acetylated histone H4 and histones H2A, H2B, H3, H3.3 and H4. Interacts with SPOP; mediating CUL3-dependent proteasomal degradation. Interacts with CBP; the interaction is dependent the sumoylation of CBP and suppresses CBP transcriptional activity via recruitment of HDAC2 directly in the complex with TP53 and HIPK2. Interacts with AXIN1; the interaction stimulates the interaction of DAXX with TP53, stimulates 'Ser-46' phosphorylation of TP53 on and induces cell death on UV irradiation. Interacts with MDM2; the interaction is direct. Interacts with USP7; the interaction is direct and independent of MDM2 and TP53. Part of a complex with DAXX, MDM2 and USP7 under non-stress conditions. Interacts (via N-terminus) with RASSF1 (via C-terminus); the interaction is independent of MDM2 and TP53; RASSF1 isoform A disrupts interactions among MDM2, DAXX and USP7, thus contributing to the efficient activation of TP53 by promoting MDM2 self-ubiquitination in cell-cycle checkpoint control in response to DNA damage. Interacts with ATRX to form the chromatin remodeling complex ATRX:DAXX. Post-translationally, sumoylated with SUMO1 on multiple lysine residues. In terms of processing, polyubiquitinated; which is promoted by CUL3 and SPOP and results in proteasomal degradation. Ubiquitinated by MDM2; inducing its degradation. Deubiquitinated by USP7; leading to stabilize it.

The protein resides in the cytoplasm. Its subcellular location is the nucleus. It localises to the nucleoplasm. It is found in the PML body. The protein localises to the nucleolus. The protein resides in the chromosome. Its subcellular location is the centromere. Transcription corepressor known to repress transcriptional potential of several sumoylated transcription factors. Down-regulates basal and activated transcription. Its transcription repressor activity is modulated by recruiting it to subnuclear compartments like the nucleolus or PML/POD/ND10 nuclear bodies through interactions with MCSR1 and PML, respectively. Seems to regulate transcription in PML/POD/ND10 nuclear bodies together with PML and may influence TNFRSF6-dependent apoptosis thereby. Inhibits transcriptional activation of PAX3 and ETS1 through direct protein-protein interactions. Modulates PAX5 activity; the function seems to involve CREBBP. Acts as an adapter protein in a MDM2-DAXX-USP7 complex by regulating the RING-finger E3 ligase MDM2 ubiquitination activity. Under non-stress condition, in association with the deubiquitinating USP7, prevents MDM2 self-ubiquitination and enhances the intrinsic E3 ligase activity of MDM2 towards TP53, thereby promoting TP53 ubiquitination and subsequent proteasomal degradation. Upon DNA damage, its association with MDM2 and USP7 is disrupted, resulting in increased MDM2 autoubiquitination and consequently, MDM2 degradation, which leads to TP53 stabilization. Acts as a histone chaperone that facilitates deposition of histone H3.3. Acts as a targeting component of the chromatin remodeling complex ATRX:DAXX which has ATP-dependent DNA translocase activity and catalyzes the replication-independent deposition of histone H3.3 in pericentric DNA repeats outside S-phase and telomeres, and the in vitro remodeling of H3.3-containing nucleosomes. Does not affect the ATPase activity of ATRX but alleviates its transcription repression activity. Upon neuronal activation associates with regulatory elements of selected immediate early genes where it promotes deposition of histone H3.3 which may be linked to transcriptional induction of these genes. Required for the recruitment of histone H3.3:H4 dimers to PML-nuclear bodies (PML-NBs); the process is independent of ATRX and facilitated by ASF1A; PML-NBs are suggested to function as regulatory sites for the incorporation of newly synthesized histone H3.3 into chromatin. Proposed to mediate activation of the JNK pathway and apoptosis via MAP3K5 in response to signaling from TNFRSF6 and TGFBR2. Interaction with HSPB1/HSP27 may prevent interaction with TNFRSF6 and MAP3K5 and block DAXX-mediated apoptosis. In contrast, in lymphoid cells JNC activation and TNFRSF6-mediated apoptosis may not involve DAXX. This is Death domain-associated protein 6 (DAXX) from Chlorocebus aethiops (Green monkey).